We begin with the raw amino-acid sequence, 192 residues long: UPF0312 protein PputW619_0484 (192 aa).

The first 23 residues, 1–23 (MLKKTFAALALGTALLSAGQAMA), serve as a signal peptide directing secretion.

This sequence belongs to the UPF0312 family. Type 1 subfamily.

The protein localises to the periplasm. The chain is UPF0312 protein PputW619_0484 from Pseudomonas putida (strain W619).